The following is a 100-amino-acid chain: Urease subunit gamma (100 aa).

Belongs to the urease gamma subunit family. As to quaternary structure, heterotrimer of UreA (gamma), UreB (beta) and UreC (alpha) subunits. Three heterotrimers associate to form the active enzyme.

It is found in the cytoplasm. It catalyses the reaction urea + 2 H2O + H(+) = hydrogencarbonate + 2 NH4(+). The protein operates within nitrogen metabolism; urea degradation; CO(2) and NH(3) from urea (urease route): step 1/1. The chain is Urease subunit gamma from Enterobacter sp. (strain 638).